The following is a 311-amino-acid chain: Malate dehydrogenase (311 aa).

NAD(+)-binding positions include 7-13 (GAAGGIG) and D34. 2 residues coordinate substrate: R81 and R87. Residues N94 and 117-119 (ITN) each bind NAD(+). Residues N119 and R153 each coordinate substrate. H177 (proton acceptor) is an active-site residue. M227 provides a ligand contact to NAD(+).

Belongs to the LDH/MDH superfamily. MDH type 1 family. As to quaternary structure, homodimer.

The catalysed reaction is (S)-malate + NAD(+) = oxaloacetate + NADH + H(+). Catalyzes the reversible oxidation of malate to oxaloacetate. The chain is Malate dehydrogenase from Shewanella frigidimarina (strain NCIMB 400).